Reading from the N-terminus, the 151-residue chain is Trivalent organoarsenical cleaving enzyme (151 aa).

One can recognise a VOC domain in the interval 2 to 118; that stretch reads SRVQLALRVP…GGEPWEVYVV (117 aa). A Fe(2+)-binding site is contributed by Q5. D61 lines the roxarsone (III) pocket. H62 is a Fe(2+) binding site. Residues C95 and C96 each coordinate roxarsone (III). Residue E114 coordinates Fe(2+).

In terms of assembly, monomer. It depends on Fe(2+) as a cofactor.

It carries out the reaction methylarsonous acid + AH2 + O2 = arsenite + methanol + A + H(+). The enzyme catalyses roxarsone (III) + AH2 + O2 = 4-hydroxy-3-nitrocyclohexa-2,5-dien-1-one + arsenite + A + H(+). The catalysed reaction is nitarsone (III) + AH2 + O2 = 4-nitrocyclohexa-2,5-dien-1-one + arsenite + A + H(+). It catalyses the reaction 4-aminophenylarsonous acid + AH2 + O2 = 4-aminocyclohexa-2,5-dien-1-one + arsenite + A. Functionally, nonheme iron-dependent dioxygenase that can break carbon-arsenic bonds, playing a role in the detoxification of environmental organoarsenical compounds. Catalyzes the oxygen-dependent demethylation of highly toxic methylarsonous acid (MAs(III)) to arsenite, which can then be exported out of the cell. Can also cleave the C-As bond in several trivalent aromatic arsenicals, including roxarsone (III), nitarsone (III) and (4-aminophenyl)arsonous acid. Organoarsenical degradation by this enzyme is proposed to have a significant impact on the arsenic biogeocycle that maintains a balance between organic and inorganic species. This Thermomonospora curvata (strain ATCC 19995 / DSM 43183 / JCM 3096 / KCTC 9072 / NBRC 15933 / NCIMB 10081 / Henssen B9) protein is Trivalent organoarsenical cleaving enzyme.